The sequence spans 403 residues: Imidazolonepropionase (403 aa).

Fe(3+) is bound by residues His69 and His71. The Zn(2+) site is built by His69 and His71. Positions 78, 141, and 174 each coordinate 4-imidazolone-5-propanoate. Tyr141 contacts N-formimidoyl-L-glutamate. A Fe(3+)-binding site is contributed by His239. A Zn(2+)-binding site is contributed by His239. Position 242 (Gln242) interacts with 4-imidazolone-5-propanoate. Residue Asp314 coordinates Fe(3+). Asp314 lines the Zn(2+) pocket. Residues Asn316 and Gly318 each coordinate N-formimidoyl-L-glutamate. Ser319 is a 4-imidazolone-5-propanoate binding site.

The protein belongs to the metallo-dependent hydrolases superfamily. HutI family. Requires Zn(2+) as cofactor. The cofactor is Fe(3+).

It is found in the cytoplasm. It catalyses the reaction 4-imidazolone-5-propanoate + H2O = N-formimidoyl-L-glutamate. It functions in the pathway amino-acid degradation; L-histidine degradation into L-glutamate; N-formimidoyl-L-glutamate from L-histidine: step 3/3. Functionally, catalyzes the hydrolytic cleavage of the carbon-nitrogen bond in imidazolone-5-propanoate to yield N-formimidoyl-L-glutamate. It is the third step in the universal histidine degradation pathway. This is Imidazolonepropionase from Legionella pneumophila (strain Corby).